The primary structure comprises 204 residues: Guanylate kinase (204 aa).

The region spanning 18–196 is the Guanylate kinase-like domain; the sequence is PKLFTISAPA…SYEILKSIFI (179 aa). 25–32 lines the ATP pocket; it reads APAGAGKT.

It belongs to the guanylate kinase family.

It localises to the cytoplasm. It catalyses the reaction GMP + ATP = GDP + ADP. Functionally, essential for recycling GMP and indirectly, cGMP. This is Guanylate kinase from Chlamydia caviae (strain ATCC VR-813 / DSM 19441 / 03DC25 / GPIC) (Chlamydophila caviae).